The sequence spans 76 residues: Bacteriocin uberolysin (76 aa).

The propeptide occupies 1 to 6 (MDILLE). The segment at residues 7–76 (LAGYTGIASG…RNLKAQAVIW (70 aa)) is a cross-link (cyclopeptide (Leu-Trp)).

Belongs to the bacteriocin class V family.

The protein localises to the secreted. In terms of biological role, cyclopeptide antibiotic with bacteriolytic activity against most streptococci (except S.rattus and S.mutans), Listeria spp., enterococci and staphylococci. The polypeptide is Bacteriocin uberolysin (ublA) (Streptococcus uberis).